We begin with the raw amino-acid sequence, 5209 residues long: E3 ubiquitin-protein ligase rnf213-alpha (5209 aa).

Polar residues-rich tracts occupy residues 27-52 and 61-72; these read SQSY…QITN and ESKSLEIQNANV. Positions 27-373 are disordered; it reads SQSYETTQGT…KRNTRSTQHI (347 aa). The segment covering 85–101 has biased composition (basic residues); sequence PKKKKRKKRKKEKKKKS. Over residues 108 to 118 the composition is skewed to low complexity; that stretch reads SSLTSDLSDIS. A compositionally biased stretch (basic and acidic residues) spans 119–128; it reads LTDKEKKMDT. 2 stretches are compositionally biased toward polar residues: residues 167–177 and 184–195; these read LSASALTTGSS and IGTTQKPVSASA. Residues 205–218 show a composition bias toward basic and acidic residues; it reads QTKEEKVKCKDEGQ. Residues 219–243 are compositionally biased toward polar residues; sequence KSLSAKAQHTPNANVDQNANVQSDA. Residues 256-269 are compositionally biased toward low complexity; it reads KSSSVKTKPSKSTV. Composition is skewed to basic and acidic residues over residues 271 to 288 and 330 to 352; these read DPKK…RDNE and MKVE…SKES. ATP-binding positions include 2036–2041, E2135, D2193, R2252, K2535, and S2610; that span reads GVGKSL. The Zn(2+) site is built by C4005, C4008, C4020, H4022, C4025, C4028, C4040, C4043, C4507, and H4511. The RING-type zinc-finger motif lies at 4005–4043; sequence CPVCMGDPRDPLSLPCDHIYCLTCIRQWLVPGQMHCPLC. An RZ-type zinc finger spans residues 4487–4557; the sequence is MPDDMLAVAQ…MQIQADRTQS (71 aa). C4518 functions as the Nucleophile; for E3 ubiquitin-lipopolysaccharide ligase activity in the catalytic mechanism. Residues C4527 and C4530 each contribute to the Zn(2+) site.

Belongs to the AAA ATPase family.

The protein resides in the cytoplasm. It is found in the cytosol. It localises to the lipid droplet. It catalyses the reaction S-ubiquitinyl-[E2 ubiquitin-conjugating enzyme]-L-cysteine + [acceptor protein]-L-lysine = [E2 ubiquitin-conjugating enzyme]-L-cysteine + N(6)-ubiquitinyl-[acceptor protein]-L-lysine.. The enzyme catalyses ATP + H2O = ADP + phosphate + H(+). Its pathway is protein modification; protein ubiquitination. In terms of biological role, atypical E3 ubiquitin ligase that can catalyze ubiquitination of both proteins and lipids, and which is involved in various processes, such as lipid metabolism, angiogenesis and cell-autonomous immunity. Acts as a key immune sensor by catalyzing ubiquitination of the lipid A moiety of bacterial lipopolysaccharide (LPS) via its RZ-type zinc-finger: restricts the proliferation of cytosolic bacteria, such as Salmonella, by generating the bacterial ubiquitin coat through the ubiquitination of LPS. Ubiquitination of LPS triggers cell-autonomous immunity, such as antibacterial autophagy, leading to degradation of the microbial invader. Involved in lipid metabolism by regulating fat storage and lipid droplet formation; act by inhibiting the lipolytic process. Also regulates lipotoxicity by inhibiting desaturation of fatty acids. Also acts as an E3 ubiquitin-protein ligase via its RING-type zinc finger. Involved in the non-canonical Wnt signaling pathway in vascular development: acts by mediating ubiquitination and degradation of proteins downstream of rspo3, leading to inhibit the non-canonical Wnt signaling pathway and promoting vessel regression. Also has ATPase activity; ATPase activity is required for ubiquitination of LPS. Also involved in neuromuscular regulation. This chain is E3 ubiquitin-protein ligase rnf213-alpha, found in Danio rerio (Zebrafish).